The chain runs to 87 residues: MNSLLMITACLVLFGTVWAKEGYLVNKSTGCKYGCFWLGKNEGCDKECKAKNQGGSYGYCYAFGCWCEGLPESTPTYPLPNKTCSKK.

The first 19 residues, M1–A19, serve as a signal peptide directing secretion. The 66-residue stretch at K20 to S85 folds into the LCN-type CS-alpha/beta domain. Disulfide bonds link C31–C84, C35–C60, C44–C65, and C48–C67.

This sequence belongs to the long (4 C-C) scorpion toxin superfamily. Sodium channel inhibitor family. Beta subfamily. Expressed by the venom gland.

It is found in the secreted. Beta toxins bind voltage-independently at site-4 of sodium channels (Nav) and shift the voltage of activation toward more negative potentials thereby affecting sodium channel activation and promoting spontaneous and repetitive firing. The sequence is that of Toxin CngtIII from Centruroides noxius (Mexican scorpion).